The chain runs to 833 residues: P protein (833 aa).

Topologically, residues 1–172 (MRLENKDIRL…QVSKLGCCVR (172 aa)) are cytoplasmic. A helical membrane pass occupies residues 173 to 193 (WIKITGLFVFVVLCSILFSLY). The Extracellular portion of the chain corresponds to 194-325 (PDQGKFWQLL…QFLGASVEAQ (132 aa)). N-linked (GlcNAc...) asparagine glycans are attached at residues Asn210, Asn214, and Asn269. Residues 326-346 (VASAVAILAGVYTLIIFEIVH) traverse the membrane as a helical segment. The Cytoplasmic segment spans residues 347–348 (RT). A helical transmembrane segment spans residues 349-369 (LAAMLGALAALAALAVVGDRP). The Extracellular segment spans residues 370-381 (SLTHVVEWIDFE). Residues 382–402 (TLALLFGMMILVAVFSETGFF) form a helical membrane-spanning segment. The Cytoplasmic portion of the chain corresponds to 403-417 (DYCAVKAYQLSRGRV). Residues 418 to 438 (WAMIFMLCLMAAILSAFLDNV) traverse the membrane as a helical segment. Topologically, residues 439–501 (TTMLLFTPVT…ELRKMGLDFA (63 aa)) are extracellular. A helical membrane pass occupies residues 502–522 (GFTAHMFLGICLVLLVSFPLL). At 523 to 617 (RLLYWNKKLY…RKHRISDRSL (95 aa)) the chain is on the cytoplasmic side. A helical membrane pass occupies residues 618 to 638 (LVKCLTVLGFVISMFFLNSFV). Residue Pro639 is a topological domain, extracellular. A helical membrane pass occupies residues 640–660 (GIHLDLGWIAILGAIWLLILA). At 661–675 (DIHDFEIILHRVEWA) the chain is on the cytoplasmic side. Residues 676–696 (TLLFFAALFVLMEALTHLHLV) form a helical membrane-spanning segment. Over 697-718 (EYVGEQTALLIKMVPEDQRFAA) the chain is Extracellular. A helical transmembrane segment spans residues 719 to 739 (AIVLIVWVSALASSLIDNIPF). Residues 740-759 (TATMIPVLLNLSQDPEISLP) are Cytoplasmic-facing. Residues 760–780 (ALPLMYALALGACLGGNGTLI) form a helical membrane-spanning segment. At 781 to 810 (GASTNVVCAGIAEKHGYGFSFMEFFRLGFP) the chain is on the extracellular side. Residues 811-831 (VMLMSCTIGMCYLLIAHIVVG) traverse the membrane as a helical segment. Topologically, residues 832–833 (WN) are cytoplasmic.

This sequence belongs to the CitM (TC 2.A.11) transporter family. Most abundant in melanocytes. Also present in neonatal and adult eye tissue presumably as a result of expression in the retinal pigmented epithelium and choroid body, known sites of melanogenesis in the eye. Small but detectable amounts also observed in fetal, neonatal and adult brain. Moderate amounts detected in adult testis and ovary. Not detected in heart, kidney, spleen, liver or thymus.

Its subcellular location is the melanosome membrane. The catalysed reaction is chloride(in) = chloride(out). In terms of biological role, contributes to a melanosome-specific anion (chloride) current that modulates melanosomal pH for optimal tyrosinase activity required for melanogenesis and the melanosome maturation. One of the components of the mammalian pigmentary system. May serve as a key control point at which color variation is determined. Major determinant of eye color. Seems to regulate the post-translational processing of tyrosinase, which catalyzes the limiting reaction in melanin synthesis. The sequence is that of P protein (Oca2) from Mus musculus (Mouse).